We begin with the raw amino-acid sequence, 227 residues long: ATP synthase F(0) complex subunit a (227 aa).

6 helical membrane passes run 14 to 34, 69 to 89, 98 to 118, 132 to 152, 179 to 199, and 202 to 222; these read YLGI…FPLP, WALL…LGLL, QLSL…IIGL, EGTP…SLFI, VFVL…VLFL, and LLEV…LSLY.

It belongs to the ATPase A chain family. Component of the ATP synthase complex composed at least of ATP5F1A/subunit alpha, ATP5F1B/subunit beta, ATP5MC1/subunit c (homooctomer), MT-ATP6/subunit a, MT-ATP8/subunit 8, ATP5ME/subunit e, ATP5MF/subunit f, ATP5MG/subunit g, ATP5MK/subunit k, ATP5MJ/subunit j, ATP5F1C/subunit gamma, ATP5F1D/subunit delta, ATP5F1E/subunit epsilon, ATP5PF/subunit F6, ATP5PB/subunit b, ATP5PD/subunit d, ATP5PO/subunit OSCP. ATP synthase complex consists of a soluble F(1) head domain (subunits alpha(3) and beta(3)) - the catalytic core - and a membrane F(0) domain - the membrane proton channel (subunits c, a, 8, e, f, g, k and j). These two domains are linked by a central stalk (subunits gamma, delta, and epsilon) rotating inside the F1 region and a stationary peripheral stalk (subunits F6, b, d, and OSCP). Interacts with DNAJC30; interaction is direct.

It localises to the mitochondrion inner membrane. It catalyses the reaction H(+)(in) = H(+)(out). Its function is as follows. Subunit a, of the mitochondrial membrane ATP synthase complex (F(1)F(0) ATP synthase or Complex V) that produces ATP from ADP in the presence of a proton gradient across the membrane which is generated by electron transport complexes of the respiratory chain. ATP synthase complex consist of a soluble F(1) head domain - the catalytic core - and a membrane F(1) domain - the membrane proton channel. These two domains are linked by a central stalk rotating inside the F(1) region and a stationary peripheral stalk. During catalysis, ATP synthesis in the catalytic domain of F(1) is coupled via a rotary mechanism of the central stalk subunits to proton translocation. With the subunit c (ATP5MC1), forms the proton-conducting channel in the F(0) domain, that contains two crucial half-channels (inlet and outlet) that facilitate proton movement from the mitochondrial intermembrane space (IMS) into the matrix. Protons are taken up via the inlet half-channel and released through the outlet half-channel, following a Grotthuss mechanism. The protein is ATP synthase F(0) complex subunit a of Formosania lacustris (Oriental stream loach).